Here is a 247-residue protein sequence, read N- to C-terminus: MLIQILTIHPAIVAPVFRESILGRACEAGILDLRVVNIRDFALSKHQQTDDYPYGGGAGLLMKPEPVFGAVRWAAGRAPAGARPPRVILMDPQGRRFDQRYAEELAREDHLILICGRYEGFDERIRALATDEISIGDYVLMGGEVAALVVVEAVTRLIPGVLGDLESSVAESHTSGLLEGPQYTRPAEFEGMRVPEILTSGNHGAIARWRREQALRRTFERRPDLLQSADLTPEERRLVEAWRTRQS.

Residues glycine 116 and 135–140 (IGDYVL) each bind S-adenosyl-L-methionine.

Belongs to the RNA methyltransferase TrmD family. As to quaternary structure, homodimer.

The protein localises to the cytoplasm. It catalyses the reaction guanosine(37) in tRNA + S-adenosyl-L-methionine = N(1)-methylguanosine(37) in tRNA + S-adenosyl-L-homocysteine + H(+). Functionally, specifically methylates guanosine-37 in various tRNAs. This Symbiobacterium thermophilum (strain DSM 24528 / JCM 14929 / IAM 14863 / T) protein is tRNA (guanine-N(1)-)-methyltransferase.